The sequence spans 246 residues: Polyhedrin (246 aa).

The protein belongs to the polyhedrin family.

Functionally, major component of the virus occlusion bodies, which are large proteinaceous structures (polyhedra), that protect the virus from the outside environment for extended periods until they are ingested by insect larvae. This Lepidoptera (butterflies and moths) protein is Polyhedrin (PH).